The sequence spans 89 residues: Small ribosomal subunit protein uS17 (89 aa).

This sequence belongs to the universal ribosomal protein uS17 family. In terms of assembly, part of the 30S ribosomal subunit.

Its function is as follows. One of the primary rRNA binding proteins, it binds specifically to the 5'-end of 16S ribosomal RNA. The sequence is that of Small ribosomal subunit protein uS17 from Phytoplasma mali (strain AT).